Here is a 234-residue protein sequence, read N- to C-terminus: Large ribosomal subunit protein uL1 (234 aa).

Belongs to the universal ribosomal protein uL1 family. Part of the 50S ribosomal subunit.

Its function is as follows. Binds directly to 23S rRNA. The L1 stalk is quite mobile in the ribosome, and is involved in E site tRNA release. Functionally, protein L1 is also a translational repressor protein, it controls the translation of the L11 operon by binding to its mRNA. The polypeptide is Large ribosomal subunit protein uL1 (Psychromonas ingrahamii (strain DSM 17664 / CCUG 51855 / 37)).